A 174-amino-acid chain; its full sequence is Probable N-acetyltransferase Rv2775 (174 aa).

In terms of domain architecture, N-acetyltransferase spans 6–172 (IRIRAAKPID…VGYRLYRSAP (167 aa)).

Belongs to the acetyltransferase family.

The sequence is that of Probable N-acetyltransferase Rv2775 from Mycobacterium tuberculosis (strain ATCC 25618 / H37Rv).